Reading from the N-terminus, the 154-residue chain is Basic phospholipase A2 PC20 (154 aa).

Residues 1–21 (MYPAHLLVLLAVCVSLLGASA) form the signal peptide. Positions 22-27 (ISPRPL) are excised as a propeptide. Intrachain disulfides connect Cys-38–Cys-98, Cys-54–Cys-143, Cys-56–Cys-72, Cys-71–Cys-125, Cys-78–Cys-118, Cys-87–Cys-111, and Cys-105–Cys-116. Ca(2+)-binding residues include Tyr-55, Ser-57, and Gly-59. The active site involves His-75. Residue Asp-76 coordinates Ca(2+). Asp-119 is a catalytic residue.

Belongs to the phospholipase A2 family. Group I subfamily. D49 sub-subfamily. Ca(2+) serves as cofactor. As to expression, expressed by the venom gland.

Its subcellular location is the secreted. It catalyses the reaction a 1,2-diacyl-sn-glycero-3-phosphocholine + H2O = a 1-acyl-sn-glycero-3-phosphocholine + a fatty acid + H(+). Its function is as follows. Snake venom phospholipase A2 (PLA2) that inhibits neuromuscular transmission by blocking acetylcholine release from the nerve termini. PLA2 catalyzes the calcium-dependent hydrolysis of the 2-acyl groups in 3-sn-phosphoglycerides. The chain is Basic phospholipase A2 PC20 from Laticauda colubrina (Yellow-lipped sea krait).